A 155-amino-acid polypeptide reads, in one-letter code: Keratin-associated protein 4-7 (155 aa).

20 tandem repeats follow at residues 5–9, 24–28, 29–33, 34–38, 44–48, 49–53, 54–58, 59–63, 64–68, 69–73, 74–78, 79–83, 84–88, 89–93, 94–98, 99–103, 104–108, 109–113, 114–118, and 119–123. Residues 5 to 123 form a 20 X 5 AA repeats of C-C-[GIKRQVHEML]-[SPTRV]-[STVQRCP] region; the sequence is CCGSVCSDQG…CCRPCCCLRP (119 aa).

Belongs to the KRTAP type 4 family. As to quaternary structure, interacts with hair keratins. As to expression, expressed in the hair follicles.

In terms of biological role, in the hair cortex, hair keratin intermediate filaments are embedded in an interfilamentous matrix, consisting of hair keratin-associated proteins (KRTAP), which are essential for the formation of a rigid and resistant hair shaft through their extensive disulfide bond cross-linking with abundant cysteine residues of hair keratins. The matrix proteins include the high-sulfur and high-glycine-tyrosine keratins. This is Keratin-associated protein 4-7 (KRTAP4-7) from Homo sapiens (Human).